The sequence spans 320 residues: Ubiquitin-like domain-containing CTD phosphatase 1 (320 aa).

Residues 6-77 (VVVIVKWSGK…LKPNFKLMMV (72 aa)) form the Ubiquitin-like domain. Positions 136 to 296 (PREGKKLLVL…LKLSDYLRKI (161 aa)) constitute an FCP1 homology domain. Mg(2+)-binding residues include aspartate 146, aspartate 148, and aspartate 255.

Requires Mg(2+) as cofactor.

The protein resides in the nucleus. It catalyses the reaction O-phospho-L-seryl-[protein] + H2O = L-seryl-[protein] + phosphate. The catalysed reaction is O-phospho-L-threonyl-[protein] + H2O = L-threonyl-[protein] + phosphate. Its function is as follows. Dephosphorylates 26S nuclear proteasomes, thereby decreasing their proteolytic activity. Recruited to the 19S regulatory particle of the 26S proteasome where it dephosphorylates 19S component Rpt1 which impairs Rpt1 ATPase activity and disrupts 26S proteasome assembly. This is Ubiquitin-like domain-containing CTD phosphatase 1 from Drosophila melanogaster (Fruit fly).